The sequence spans 131 residues: ATP synthase epsilon chain (131 aa).

The protein belongs to the ATPase epsilon chain family. F-type ATPases have 2 components, CF(1) - the catalytic core - and CF(0) - the membrane proton channel. CF(1) has five subunits: alpha(3), beta(3), gamma(1), delta(1), epsilon(1). CF(0) has three main subunits: a, b and c.

The protein resides in the cell membrane. Functionally, produces ATP from ADP in the presence of a proton gradient across the membrane. The chain is ATP synthase epsilon chain from Bacillus licheniformis (strain ATCC 14580 / DSM 13 / JCM 2505 / CCUG 7422 / NBRC 12200 / NCIMB 9375 / NCTC 10341 / NRRL NRS-1264 / Gibson 46).